The following is a 211-amino-acid chain: Tudor-interacting repair regulator protein (211 aa).

Glycyl lysine isopeptide (Lys-Gly) (interchain with G-Cter in ubiquitin) cross-links involve residues Lys-10 and Lys-151. The segment at 118–205 (TLEQLHAVEI…TEKQKKALEK (88 aa)) is interaction with PXN.

The protein belongs to the Nudix hydrolase family. TIRR subfamily. As to quaternary structure, homodimer. Interacts with TP53BP1 (via the Tudor-like domain); interaction is abolished following DNA damage and TP53BP1 phosphorylation by ATM. Interacts (via the cytoplasmic part) with SDC4. Interacts with TGFB1I1 and PXN.

It is found in the nucleus. Its function is as follows. Key regulator of TP53BP1 required to stabilize TP53BP1 and regulate its recruitment to chromatin. In absence of DNA damage, interacts with the tandem Tudor-like domain of TP53BP1, masking the region that binds histone H4 dimethylated at 'Lys-20' (H4K20me2), thereby preventing TP53BP1 recruitment to chromatin and maintaining TP53BP1 localization to the nucleus. Following DNA damage, ATM-induced phosphorylation of TP53BP1 and subsequent recruitment of RIF1 leads to dissociate NUDT16L1/TIRR from TP53BP1, unmasking the tandem Tudor-like domain and allowing recruitment of TP53BP1 to DNA double strand breaks (DSBs). Binds U8 snoRNA. The chain is Tudor-interacting repair regulator protein from Homo sapiens (Human).